Consider the following 51-residue polypeptide: Large ribosomal subunit protein eL39 (51 aa).

This sequence belongs to the eukaryotic ribosomal protein eL39 family.

The chain is Large ribosomal subunit protein eL39 from Methanococcus aeolicus (strain ATCC BAA-1280 / DSM 17508 / OCM 812 / Nankai-3).